The sequence spans 407 residues: Phosphopentomutase (407 aa).

Positions 11, 305, 310, 346, 347, and 358 each coordinate Mn(2+).

This sequence belongs to the phosphopentomutase family. Requires Mn(2+) as cofactor.

The protein localises to the cytoplasm. The catalysed reaction is 2-deoxy-alpha-D-ribose 1-phosphate = 2-deoxy-D-ribose 5-phosphate. It carries out the reaction alpha-D-ribose 1-phosphate = D-ribose 5-phosphate. Its pathway is carbohydrate degradation; 2-deoxy-D-ribose 1-phosphate degradation; D-glyceraldehyde 3-phosphate and acetaldehyde from 2-deoxy-alpha-D-ribose 1-phosphate: step 1/2. Functionally, isomerase that catalyzes the conversion of deoxy-ribose 1-phosphate (dRib-1-P) and ribose 1-phosphate (Rib-1-P) to deoxy-ribose 5-phosphate (dRib-5-P) and ribose 5-phosphate (Rib-5-P), respectively. The sequence is that of Phosphopentomutase from Legionella pneumophila (strain Paris).